Reading from the N-terminus, the 457-residue chain is Siroheme synthase (457 aa).

Residues 1–204 are precorrin-2 dehydrogenase /sirohydrochlorin ferrochelatase; it reads MDHLPIFCQL…NDQKAITETT (204 aa). Residues 22-23 and 43-44 contribute to the NAD(+) site; these read DV and LA. Position 128 is a phosphoserine (serine 128). Positions 216–457 are uroporphyrinogen-III C-methyltransferase; the sequence is GEVVLVGAGP…RDKLNWFSNH (242 aa). S-adenosyl-L-methionine is bound at residue proline 225. The active-site Proton acceptor is aspartate 248. Lysine 270 serves as the catalytic Proton donor. Residues 301-303, isoleucine 306, 331-332, methionine 382, and glycine 411 contribute to the S-adenosyl-L-methionine site; these read GGD and TA.

This sequence in the N-terminal section; belongs to the precorrin-2 dehydrogenase / sirohydrochlorin ferrochelatase family. The protein in the C-terminal section; belongs to the precorrin methyltransferase family.

The catalysed reaction is uroporphyrinogen III + 2 S-adenosyl-L-methionine = precorrin-2 + 2 S-adenosyl-L-homocysteine + H(+). It catalyses the reaction precorrin-2 + NAD(+) = sirohydrochlorin + NADH + 2 H(+). The enzyme catalyses siroheme + 2 H(+) = sirohydrochlorin + Fe(2+). Its pathway is cofactor biosynthesis; adenosylcobalamin biosynthesis; precorrin-2 from uroporphyrinogen III: step 1/1. It participates in cofactor biosynthesis; adenosylcobalamin biosynthesis; sirohydrochlorin from precorrin-2: step 1/1. The protein operates within porphyrin-containing compound metabolism; siroheme biosynthesis; precorrin-2 from uroporphyrinogen III: step 1/1. It functions in the pathway porphyrin-containing compound metabolism; siroheme biosynthesis; siroheme from sirohydrochlorin: step 1/1. Its pathway is porphyrin-containing compound metabolism; siroheme biosynthesis; sirohydrochlorin from precorrin-2: step 1/1. In terms of biological role, multifunctional enzyme that catalyzes the SAM-dependent methylations of uroporphyrinogen III at position C-2 and C-7 to form precorrin-2 via precorrin-1. Then it catalyzes the NAD-dependent ring dehydrogenation of precorrin-2 to yield sirohydrochlorin. Finally, it catalyzes the ferrochelation of sirohydrochlorin to yield siroheme. The polypeptide is Siroheme synthase (Escherichia coli O6:H1 (strain CFT073 / ATCC 700928 / UPEC)).